A 378-amino-acid chain; its full sequence is Erythronate-4-phosphate dehydrogenase (378 aa).

The substrate site is built by serine 45 and threonine 66. Residues aspartate 146 and threonine 175 each contribute to the NAD(+) site. The active site involves arginine 208. Residue aspartate 232 coordinates NAD(+). Glutamate 237 is an active-site residue. The active-site Proton donor is histidine 254. Glycine 257 lines the NAD(+) pocket. Residue tyrosine 258 coordinates substrate.

Belongs to the D-isomer specific 2-hydroxyacid dehydrogenase family. PdxB subfamily. In terms of assembly, homodimer.

Its subcellular location is the cytoplasm. The catalysed reaction is 4-phospho-D-erythronate + NAD(+) = (R)-3-hydroxy-2-oxo-4-phosphooxybutanoate + NADH + H(+). The protein operates within cofactor biosynthesis; pyridoxine 5'-phosphate biosynthesis; pyridoxine 5'-phosphate from D-erythrose 4-phosphate: step 2/5. Its function is as follows. Catalyzes the oxidation of erythronate-4-phosphate to 3-hydroxy-2-oxo-4-phosphonooxybutanoate. This chain is Erythronate-4-phosphate dehydrogenase, found in Escherichia coli O7:K1 (strain IAI39 / ExPEC).